Here is a 499-residue protein sequence, read N- to C-terminus: MVPVIALVGRPNVGKSTLFNRLTKSRDAIVAEYAGLTRDRQYGEAKWQGRTYIVIDTGGISGDEEGIDAKMAEQSLQAIEEADAVLFMVDSRAGLTAADQMIGEHLRKRNKRCFLVANKVDSVDPDIARAEFSPLGLGDALPIAAAHGRGISHMLEQALGIFPKDNADENAEGEEGGELAEGEEVVAEGQEPKRIPGPSEKEGIKIAIIGRPNVGKSTLVNRMLGEERVIVYDQAGTTRDSIYIPFERDEEKYTLIDTAGVRRRGKIFEAVEKFSVVKTLQAIQDANVVIFVMDAREGVVEHDLNLLGFVLETGRALVIALNKWDGMEQGEKDYVKTELERRLFFVDYADIHFISAKHGTGVGHLYKSVQAAFKSAITRWPTSRLTQILEDAVREHQPPMVNSRRIKLRYAHLGGANPPLIVIHGNQVDAVPKSYTRYLENTYRRVLKLVGTPIRIEYKGGDNPYEGKKNTLTDRQVNKKRRLMSHHKKAEKKRRDKKR.

The 164-residue stretch at 3–166 (PVIALVGRPN…QALGIFPKDN (164 aa)) folds into the EngA-type G 1 domain. GTP-binding positions include 9 to 16 (GRPNVGKS), 56 to 60 (DTGGI), and 118 to 121 (NKVD). Residues 166 to 199 (NADENAEGEEGGELAEGEEVVAEGQEPKRIPGPS) are disordered. A compositionally biased stretch (acidic residues) spans 168-186 (DENAEGEEGGELAEGEEVV). Residues 190-199 (QEPKRIPGPS) are compositionally biased toward basic and acidic residues. Positions 204–377 (IKIAIIGRPN…SVQAAFKSAI (174 aa)) constitute an EngA-type G 2 domain. GTP is bound by residues 210–217 (GRPNVGKS), 257–261 (DTAGV), and 322–325 (NKWD). In terms of domain architecture, KH-like spans 378-462 (TRWPTSRLTQ…PIRIEYKGGD (85 aa)). Over residues 459–472 (KGGDNPYEGKKNTL) the composition is skewed to basic and acidic residues. Residues 459–499 (KGGDNPYEGKKNTLTDRQVNKKRRLMSHHKKAEKKRRDKKR) are disordered. Residues 478–499 (NKKRRLMSHHKKAEKKRRDKKR) are compositionally biased toward basic residues.

The protein belongs to the TRAFAC class TrmE-Era-EngA-EngB-Septin-like GTPase superfamily. EngA (Der) GTPase family. As to quaternary structure, associates with the 50S ribosomal subunit.

Its function is as follows. GTPase that plays an essential role in the late steps of ribosome biogenesis. In Stutzerimonas stutzeri (strain A1501) (Pseudomonas stutzeri), this protein is GTPase Der.